Consider the following 348-residue polypeptide: Anthranilate phosphoribosyltransferase (348 aa).

5-phospho-alpha-D-ribose 1-diphosphate-binding positions include Gly-87, 90-91 (GD), Thr-95, 97-100 (NIST), 115-123 (KHGNRSASG), and Ser-127. Residue Gly-87 participates in anthranilate binding. Residue Ser-99 participates in Mg(2+) binding. Asn-118 is an anthranilate binding site. Residue Arg-173 participates in anthranilate binding. Positions 232 and 233 each coordinate Mg(2+).

It belongs to the anthranilate phosphoribosyltransferase family. Homodimer. Mg(2+) serves as cofactor.

It carries out the reaction N-(5-phospho-beta-D-ribosyl)anthranilate + diphosphate = 5-phospho-alpha-D-ribose 1-diphosphate + anthranilate. The protein operates within amino-acid biosynthesis; L-tryptophan biosynthesis; L-tryptophan from chorismate: step 2/5. Catalyzes the transfer of the phosphoribosyl group of 5-phosphorylribose-1-pyrophosphate (PRPP) to anthranilate to yield N-(5'-phosphoribosyl)-anthranilate (PRA). The protein is Anthranilate phosphoribosyltransferase of Synechococcus sp. (strain WH7803).